The following is a 473-amino-acid chain: 3-isopropylmalate dehydratase large subunit (473 aa).

[4Fe-4S] cluster is bound by residues Cys-351, Cys-414, and Cys-417.

Belongs to the aconitase/IPM isomerase family. LeuC type 1 subfamily. As to quaternary structure, heterodimer of LeuC and LeuD. It depends on [4Fe-4S] cluster as a cofactor.

The catalysed reaction is (2R,3S)-3-isopropylmalate = (2S)-2-isopropylmalate. Its pathway is amino-acid biosynthesis; L-leucine biosynthesis; L-leucine from 3-methyl-2-oxobutanoate: step 2/4. Functionally, catalyzes the isomerization between 2-isopropylmalate and 3-isopropylmalate, via the formation of 2-isopropylmaleate. In Variovorax paradoxus (strain S110), this protein is 3-isopropylmalate dehydratase large subunit.